Reading from the N-terminus, the 357-residue chain is N-acetyl-gamma-glutamyl-phosphate reductase (357 aa).

The active site involves Cys160.

It belongs to the NAGSA dehydrogenase family. Type 1 subfamily.

The protein resides in the cytoplasm. It catalyses the reaction N-acetyl-L-glutamate 5-semialdehyde + phosphate + NADP(+) = N-acetyl-L-glutamyl 5-phosphate + NADPH + H(+). Its pathway is amino-acid biosynthesis; L-arginine biosynthesis; N(2)-acetyl-L-ornithine from L-glutamate: step 3/4. Its function is as follows. Catalyzes the NADPH-dependent reduction of N-acetyl-5-glutamyl phosphate to yield N-acetyl-L-glutamate 5-semialdehyde. The sequence is that of N-acetyl-gamma-glutamyl-phosphate reductase from Parasynechococcus marenigrum (strain WH8102).